A 27-amino-acid chain; its full sequence is uncharacterized protein (27 aa).

It is found in the plastid. It localises to the cyanelle. This is an uncharacterized protein from Cyanophora paradoxa.